A 77-amino-acid chain; its full sequence is Large ribosomal subunit protein uL24c (77 aa).

It belongs to the universal ribosomal protein uL24 family. As to quaternary structure, part of the 50S ribosomal subunit.

It is found in the plastid. The protein resides in the chloroplast. Functionally, one of two assembly initiator proteins, it binds directly to the 5'-end of the 23S rRNA, where it nucleates assembly of the 50S subunit. In Thalassiosira pseudonana (Marine diatom), this protein is Large ribosomal subunit protein uL24c (rpl24).